The sequence spans 407 residues: Imidazolonepropionase (407 aa).

The Fe(3+) site is built by H74 and H76. Residues H74 and H76 each coordinate Zn(2+). 4-imidazolone-5-propanoate-binding residues include R83, Y146, and H179. Y146 serves as a coordination point for N-formimidoyl-L-glutamate. H244 serves as a coordination point for Fe(3+). H244 provides a ligand contact to Zn(2+). Q247 provides a ligand contact to 4-imidazolone-5-propanoate. Residue D319 participates in Fe(3+) binding. D319 is a binding site for Zn(2+). N-formimidoyl-L-glutamate contacts are provided by N321 and G323. T324 is a 4-imidazolone-5-propanoate binding site.

Belongs to the metallo-dependent hydrolases superfamily. HutI family. Requires Zn(2+) as cofactor. The cofactor is Fe(3+).

The protein localises to the cytoplasm. The catalysed reaction is 4-imidazolone-5-propanoate + H2O = N-formimidoyl-L-glutamate. The protein operates within amino-acid degradation; L-histidine degradation into L-glutamate; N-formimidoyl-L-glutamate from L-histidine: step 3/3. In terms of biological role, catalyzes the hydrolytic cleavage of the carbon-nitrogen bond in imidazolone-5-propanoate to yield N-formimidoyl-L-glutamate. It is the third step in the universal histidine degradation pathway. The sequence is that of Imidazolonepropionase from Salmonella heidelberg (strain SL476).